The chain runs to 109 residues: Large ribosomal subunit protein uL22 (109 aa).

It belongs to the universal ribosomal protein uL22 family. Part of the 50S ribosomal subunit.

This protein binds specifically to 23S rRNA; its binding is stimulated by other ribosomal proteins, e.g. L4, L17, and L20. It is important during the early stages of 50S assembly. It makes multiple contacts with different domains of the 23S rRNA in the assembled 50S subunit and ribosome. Its function is as follows. The globular domain of the protein is located near the polypeptide exit tunnel on the outside of the subunit, while an extended beta-hairpin is found that lines the wall of the exit tunnel in the center of the 70S ribosome. This chain is Large ribosomal subunit protein uL22, found in Ralstonia pickettii (strain 12J).